A 109-amino-acid chain; its full sequence is Cell division protein ZapA (109 aa).

Residues 22-99 are a coiled coil; the sequence is EQQDALNMAA…IEQALLEQGR (78 aa).

Belongs to the ZapA family. Type 1 subfamily. Homodimer. Interacts with FtsZ.

It localises to the cytoplasm. In terms of biological role, activator of cell division through the inhibition of FtsZ GTPase activity, therefore promoting FtsZ assembly into bundles of protofilaments necessary for the formation of the division Z ring. It is recruited early at mid-cell but it is not essential for cell division. The protein is Cell division protein ZapA of Yersinia pseudotuberculosis serotype O:1b (strain IP 31758).